The primary structure comprises 248 residues: MSGISKLSDFWVEKYKKESKKSWDKFYKRNETRFFKDRHWLDREFDCYFGLPDKLPLTILEVGCGVGNLVYPLLEVQPNLKIYCCDFSPRAIDFVKKHSCYNENRVFPFVNDITEDSLLEVLGSACIDTLTAIFVLSAIPREKQLRSIKNLASVIKPGGHLVFRDYCDGDFAQEKFMTSGDPSMIDEQTFVRQDGTLSLFFREEDIAEWMKSAGFGLVTLDRVNRTVDNRKRNLNMKRTFLQGVWKKL.

The S-adenosyl-L-methionine site is built by W23, Y27, G63, D86, D112, and I133.

This sequence belongs to the methyltransferase superfamily. METL family.

The protein resides in the cytoplasm. Its subcellular location is the nucleus. It carries out the reaction cytidine(32) in tRNA(Ser) + S-adenosyl-L-methionine = N(3)-methylcytidine(32) in tRNA(Ser) + S-adenosyl-L-homocysteine + H(+). Functionally, S-adenosyl-L-methionine-dependent methyltransferase that mediates N(3)-methylcytidine modification of residue 32 of the tRNA anticodon loop of tRNA(Ser). N(3)-methylcytidine methylation by trm141 requires the formation of N(6)-dimethylallyladenosine(37) (i6A37) by tit1 as prerequisite. Does not catalyze N(3)-methylcytidine modification of tRNA(Thr). This is tRNA N(3)-methylcytidine methyltransferase trm141 from Schizosaccharomyces pombe (strain 972 / ATCC 24843) (Fission yeast).